The following is a 264-amino-acid chain: Carbonic anhydrase 7 (264 aa).

The region spanning 5–262 (HGWGYGQDDG…LKGRVVKASF (258 aa)) is the Alpha-carbonic anhydrase domain. His-66 functions as the Proton donor/acceptor in the catalytic mechanism. The Zn(2+) site is built by His-96, His-98, and His-121. Substrate is bound at residue 201–202 (TT).

This sequence belongs to the alpha-carbonic anhydrase family. Requires Zn(2+) as cofactor.

Its subcellular location is the cytoplasm. The catalysed reaction is hydrogencarbonate + H(+) = CO2 + H2O. Activated by histamine, L-adrenaline, L- and D-histidine, and L- and D-phenylalanine. Inhibited by coumarins, sulfonamide derivatives such as acetazolamide (AZA), by saccharin and Foscarnet (phosphonoformate trisodium salt). Reversible hydration of carbon dioxide. In Homo sapiens (Human), this protein is Carbonic anhydrase 7 (CA7).